Reading from the N-terminus, the 81-residue chain is Photosystem I iron-sulfur center (81 aa).

2 4Fe-4S ferredoxin-type domains span residues 2-31 (SHTVKIYDTCIGCTQCVRACPTDVLEMVPW) and 37-68 (GQIASSPRVEDCVGCKRCETACPTDFLSVRVY). Residues cysteine 11, cysteine 14, cysteine 17, cysteine 21, cysteine 48, cysteine 51, cysteine 54, and cysteine 58 each coordinate [4Fe-4S] cluster.

The eukaryotic PSI reaction center is composed of at least 11 subunits. Requires [4Fe-4S] cluster as cofactor.

The protein resides in the plastid. It is found in the chloroplast thylakoid membrane. The enzyme catalyses reduced [plastocyanin] + hnu + oxidized [2Fe-2S]-[ferredoxin] = oxidized [plastocyanin] + reduced [2Fe-2S]-[ferredoxin]. In terms of biological role, apoprotein for the two 4Fe-4S centers FA and FB of photosystem I (PSI); essential for photochemical activity. FB is the terminal electron acceptor of PSI, donating electrons to ferredoxin. The C-terminus interacts with PsaA/B/D and helps assemble the protein into the PSI complex. Required for binding of PsaD and PsaE to PSI. PSI is a plastocyanin/cytochrome c6-ferredoxin oxidoreductase, converting photonic excitation into a charge separation, which transfers an electron from the donor P700 chlorophyll pair to the spectroscopically characterized acceptors A0, A1, FX, FA and FB in turn. This chain is Photosystem I iron-sulfur center, found in Phaeodactylum tricornutum (strain CCAP 1055/1).